A 430-amino-acid polypeptide reads, in one-letter code: MKILVAGGGGREHAICLALTKNANVELYSVMGKKNPGIAKIARESFIHAETDVPAVLAFAKEHNIQYAVVGPEAPLEAGLVDALTKAGIGCVGPVKAAARIETDKGFCRGLMNKYGIDGCPAYKLCNTPKEAAEFIREYPGDLAVKPTGLTGGKGVKVMGEQVDREGAVEYAMTLKDQVIILEERLLGEEFTLMAFVDGKHLVPMPLVQDHKRAFEGDVGPNTGGMGSYSLENHKFPFVTEDDYAKAISIMQATIDALAQEGSPYKGILYGQFMNTKTGPKVIEFNARFGDPEAMNVLSILTSDFLTIAEHIINGTLSANDVSFEEKATVCKYIVPMDYPDKPHAGDVITVGPAENTILYYANIALENGVLMTLTSRTMAYVGIGASLAEAEKYAEAACRNVSGNVRYRSDIGTEALFAKRIAHMKELRS.

The region spanning 109-314 is the ATP-grasp domain; sequence RGLMNKYGID…FLTIAEHIIN (206 aa). 136–192 contributes to the ATP binding site; it reads IREYPGDLAVKPTGLTGGKGVKVMGEQVDREGAVEYAMTLKDQVIILEERLLGEEFT. Gln272, Glu284, and Asn286 together coordinate Mg(2+). Mn(2+) contacts are provided by Gln272, Glu284, and Asn286.

It belongs to the GARS family. The cofactor is Mg(2+). Requires Mn(2+) as cofactor.

The enzyme catalyses 5-phospho-beta-D-ribosylamine + glycine + ATP = N(1)-(5-phospho-beta-D-ribosyl)glycinamide + ADP + phosphate + H(+). The protein operates within purine metabolism; IMP biosynthesis via de novo pathway; N(1)-(5-phospho-D-ribosyl)glycinamide from 5-phospho-alpha-D-ribose 1-diphosphate: step 2/2. The polypeptide is Phosphoribosylamine--glycine ligase (Methanocorpusculum labreanum (strain ATCC 43576 / DSM 4855 / Z)).